A 412-amino-acid polypeptide reads, in one-letter code: MATTSHNKPSLFPLLSLLCFISIFLLLSLSKRASLSSPKTHRSATVFPPKPDGSLSPLSATCDFSEGSWIYDPNPRSTRYTSSCKEIFKGWNCIRNNKTNGFEISNWRWKPKHCDLPSFDPLKFLQSHRNTNIGFVGDSLNRNMFVSLFCMLKSVTGELKKWRPAGADRGFTFSQYNLTIAYHRTNLLARYGRWSANAKGGELESLGFKEGYRVDVDIPDSSWAKASSFHDILILNTGHWWWAPSKFDPVKSPMLFFEGGRPILPPIPPATGLDRVLNNMVNFVEKTKRPGGIIFFRTQSPRHFEGGDWDQGGTCQRLQPLLPGKVEEFFSVGNNGTNVEVRLVNQHLYNSLKSRSAFHVLDITRMSEYRADAHPAAAGGKNHDDCMHWCLPGLTDTWNDLFVATLHTIKAL.

The chain crosses the membrane as a helical; Signal-anchor for type II membrane protein span at residues 9 to 29 (PSLFPLLSLLCFISIFLLLSL). Positions 137–139 (GDS) match the GDS motif motif. The DCXHWCLPGXXDXWN motif motif lies at 385-399 (DCMHWCLPGLTDTWN).

This sequence belongs to the PC-esterase family. TBL subfamily.

Its subcellular location is the membrane. May act as a bridging protein that binds pectin and other cell wall polysaccharides. Probably involved in maintaining esterification of pectins. May be involved in the specific O-acetylation of cell wall polymers. The protein is Protein trichome birefringence-like 13 (TBL13) of Arabidopsis thaliana (Mouse-ear cress).